Consider the following 387-residue polypeptide: tRNA N6-adenosine threonylcarbamoyltransferase (387 aa).

2 residues coordinate Fe cation: histidine 112 and histidine 116. Residues 134 to 138 (LASGG), aspartate 167, glycine 180, and asparagine 325 each bind substrate. Aspartate 353 is a binding site for Fe cation.

It belongs to the KAE1 / TsaD family. Fe(2+) serves as cofactor.

Its subcellular location is the cytoplasm. It carries out the reaction L-threonylcarbamoyladenylate + adenosine(37) in tRNA = N(6)-L-threonylcarbamoyladenosine(37) in tRNA + AMP + H(+). Required for the formation of a threonylcarbamoyl group on adenosine at position 37 (t(6)A37) in tRNAs that read codons beginning with adenine. Is involved in the transfer of the threonylcarbamoyl moiety of threonylcarbamoyl-AMP (TC-AMP) to the N6 group of A37, together with TsaE and TsaB. TsaD likely plays a direct catalytic role in this reaction. The sequence is that of tRNA N6-adenosine threonylcarbamoyltransferase from Rickettsia typhi (strain ATCC VR-144 / Wilmington).